We begin with the raw amino-acid sequence, 222 residues long: MSNDPGNEVSSLYPPPPPYVKFFTQSNLEKLPKYKEKKAASAKQTAPNNSNGGSEEEITCALDYLIPPPMPKNQQYRAFGSIWQVKDQLPDLESMGLTQLYKKSTENESTNYQYKIQELRKLLKSLLLNYLELIGVLSINPDMYERKVENIRTILVNIHHLLNEYRPHQSRESLIMLLEEQLEYKRGEIREIEQVCKQVHDKLTSIQDTLRTGSQSPPSSSQ.

The disordered stretch occupies residues 34-55 (YKEKKAASAKQTAPNNSNGGSE). Over residues 42–53 (AKQTAPNNSNGG) the composition is skewed to polar residues.

It belongs to the Mediator complex subunit 7 family. In terms of assembly, component of the Mediator complex, which is composed of at least 21 subunits that form three structurally distinct submodules. The Mediator head module contains MED6, MED8, MED11, SRB4/MED17, SRB5/MED18, ROX3/MED19, SRB2/MED20 and SRB6/MED22, the middle module contains MED1, MED4, NUT1/MED5, MED7, CSE2/MED9, NUT2/MED10, SRB7/MED21 and SOH1/MED31, and the tail module contains MED2, PGD1/MED3, RGR1/MED14, GAL11/MED15 and SIN4/MED16. The head and the middle modules interact directly with RNA polymerase II, whereas the elongated tail module interacts with gene-specific regulatory proteins. MED7 interacts directly with MED1, MED4 and SRB7/MED21.

The protein resides in the nucleus. Functionally, component of the Mediator complex, a coactivator involved in the regulated transcription of nearly all RNA polymerase II-dependent genes. Mediator functions as a bridge to convey information from gene-specific regulatory proteins to the basal RNA polymerase II transcription machinery. The Mediator complex, having a compact conformation in its free form, is recruited to promoters by direct interactions with regulatory proteins and serves for the assembly of a functional preinitiation complex with RNA polymerase II and the general transcription factors. The Mediator complex unfolds to an extended conformation and partially surrounds RNA polymerase II, specifically interacting with the unphosphorylated form of the C-terminal domain (CTD) of RNA polymerase II. The Mediator complex dissociates from the RNA polymerase II holoenzyme and stays at the promoter when transcriptional elongation begins. This is Mediator of RNA polymerase II transcription subunit 7 (MED7) from Saccharomyces cerevisiae (strain ATCC 204508 / S288c) (Baker's yeast).